Reading from the N-terminus, the 114-residue chain is Vesicle-associated membrane protein 2 (114 aa).

Positions 1 to 11 (MSAPAAGPPAA) are enriched in pro residues. The disordered stretch occupies residues 1 to 31 (MSAPAAGPPAAAPGDGAPQGPPNLTSNRRLQ). An N-acetylserine modification is found at serine 2. Residues 2 to 92 (SAPAAGPPAA…KRKYWWKNMK (91 aa)) lie on the Cytoplasmic side of the membrane. Residues 29-89 (RLQQTQAQVD…AKLKRKYWWK (61 aa)) form the v-SNARE coiled-coil homology domain. Residues 93-111 (MMIIMGVICAIILIIIIVY) traverse the membrane as a helical; Anchor for type IV membrane protein segment. Topologically, residues 112–114 (FST) are vesicular.

The protein belongs to the synaptobrevin family.

It localises to the cytoplasmic vesicle. The protein resides in the secretory vesicle. The protein localises to the synaptic vesicle membrane. It is found in the cell membrane. In terms of biological role, involved in the targeting and/or fusion of transport vesicles to their target membrane. Major SNARE protein of synaptic vesicles which mediates fusion of synaptic vesicles to release neurotransmitters. Essential for fast vesicular exocytosis and activity-dependent neurotransmitter release as well as fast endocytosis that mediates rapid reuse of synaptic vesicles. This is Vesicle-associated membrane protein 2 (vamp2) from Xenopus laevis (African clawed frog).